The chain runs to 360 residues: 3-dehydroquinate synthase (360 aa).

NAD(+)-binding positions include 106–110 (GVIGD), 130–131 (TS), Lys143, and Lys152. Positions 185, 246, and 262 each coordinate Zn(2+).

Belongs to the sugar phosphate cyclases superfamily. Dehydroquinate synthase family. Requires Co(2+) as cofactor. It depends on Zn(2+) as a cofactor. NAD(+) serves as cofactor.

The protein resides in the cytoplasm. It catalyses the reaction 7-phospho-2-dehydro-3-deoxy-D-arabino-heptonate = 3-dehydroquinate + phosphate. It participates in metabolic intermediate biosynthesis; chorismate biosynthesis; chorismate from D-erythrose 4-phosphate and phosphoenolpyruvate: step 2/7. In terms of biological role, catalyzes the conversion of 3-deoxy-D-arabino-heptulosonate 7-phosphate (DAHP) to dehydroquinate (DHQ). In Leuconostoc citreum (strain KM20), this protein is 3-dehydroquinate synthase.